Reading from the N-terminus, the 434-residue chain is Putative D-alanyl-D-alanine carboxypeptidase (434 aa).

A helical; Signal-anchor transmembrane segment spans residues 7–25; that stretch reads YLSLLAVSCSVSAAKYPVL.

It belongs to the peptidase S12 family. YfeW subfamily.

The protein resides in the cell inner membrane. It catalyses the reaction Preferential cleavage: (Ac)2-L-Lys-D-Ala-|-D-Ala. Also transpeptidation of peptidyl-alanyl moieties that are N-acyl substituents of D-alanine.. The sequence is that of Putative D-alanyl-D-alanine carboxypeptidase from Escherichia coli O157:H7.